A 204-amino-acid chain; its full sequence is dITP/XTP pyrophosphatase (204 aa).

Substrate is bound at residue Ser8–Lys13. Glu41 and Asp76 together coordinate Mg(2+). Residue Asp76 is the Proton acceptor of the active site. Residues Ser77, Phe159–Asp162, Lys182, and His187–Arg188 each bind substrate.

Belongs to the HAM1 NTPase family. In terms of assembly, homodimer. Mg(2+) is required as a cofactor.

The enzyme catalyses XTP + H2O = XMP + diphosphate + H(+). It catalyses the reaction dITP + H2O = dIMP + diphosphate + H(+). It carries out the reaction ITP + H2O = IMP + diphosphate + H(+). Pyrophosphatase that catalyzes the hydrolysis of nucleoside triphosphates to their monophosphate derivatives, with a high preference for the non-canonical purine nucleotides XTP (xanthosine triphosphate), dITP (deoxyinosine triphosphate) and ITP. Seems to function as a house-cleaning enzyme that removes non-canonical purine nucleotides from the nucleotide pool, thus preventing their incorporation into DNA/RNA and avoiding chromosomal lesions. The polypeptide is dITP/XTP pyrophosphatase (Clostridium perfringens (strain 13 / Type A)).